The sequence spans 1233 residues: Capping protein-inhibiting regulator of actin dynamics (1233 aa).

Ser7, Ser28, and Ser132 each carry phosphoserine. 3 disordered regions span residues 92 to 136 (AENK…SAGT), 157 to 224 (AKHK…RRRQ), and 269 to 527 (LLEE…WQEV). Residues 157–176 (AKHKLAVKPKKQRVSKKHRR) are compositionally biased toward basic residues. Basic and acidic residues-rich tracts occupy residues 200-211 (PGEDKPTWHEEE), 282-293 (EAERAPREEQQR), 302-322 (DAER…ERRR), and 329-362 (AEER…KRQE). The interval 321 to 472 (RRLQAQAQAE…EQQGRSGDFQ (152 aa)) is required for interaction with actin-capping proteins. Acidic residues-rich tracts occupy residues 363 to 376 (EEEA…EQQE) and 397 to 407 (EEEDLGEEEEE). A Phosphoserine modification is found at Ser420. 2 stretches are compositionally biased toward basic and acidic residues: residues 432-447 (DQER…HSEE) and 505-527 (VERK…WQEV). Phosphoserine is present on Ser556. Position 559 is a phosphothreonine (Thr559). Disordered regions lie at residues 560 to 586 (PAKD…HALP), 629 to 788 (HAEA…TTEG), 815 to 1082 (EFTT…TEKV), and 1097 to 1186 (QKGF…ISDS). Residues 677–707 (KNAESDPRSSERDQLRPGDESTPRGRCDSRG) show a composition bias toward basic and acidic residues. The span at 732–742 (GTETSKQSTEA) shows a compositional bias: polar residues. The span at 768–783 (ELGKGPEKSEMHREPA) shows a compositional bias: basic and acidic residues. 2 stretches are compositionally biased toward polar residues: residues 815–825 (EFTTSSDSETA) and 852–863 (TNYSLRFNCDQQ). A compositionally biased stretch (low complexity) spans 876 to 889 (GDSADAGPPAAGSA). The segment covering 908–921 (QERKQAPSTRRDSA) has biased composition (basic and acidic residues). Over residues 956–967 (PLAQKPALAPKP) the composition is skewed to low complexity. Thr971 is subject to Phosphothreonine. Phosphoserine is present on residues Ser975 and Ser1017. The span at 994–1040 (GRPDPEPSEPSKEDQESSDRRPPSPPGPEERKGQKRDEEEEATERKP) shows a compositional bias: basic and acidic residues. The segment covering 1047–1057 (ATQQEKPSQTP) has biased composition (polar residues). 2 stretches are compositionally biased toward basic and acidic residues: residues 1059–1082 (AGRK…TEKV) and 1099–1124 (GFRE…KLSK). Over residues 1127-1139 (VSVSVQPGSSSVS) the composition is skewed to low complexity. Residues 1151 to 1170 (PEEKRPETAVSRLERREQLK) show a composition bias toward basic and acidic residues. Residues 1174 to 1183 (TLPTSVTVEI) show a composition bias toward polar residues.

In terms of assembly, directly interacts with actin-capping proteins CAPZA1, CAPZA2 and CAPZB; this interaction decreases the binding of capping proteins to actin. As to expression, expressed in intestinal epithelial cells (at protein level).

The protein resides in the cytoplasm. It is found in the cytosol. Involved in epithelial cell integrity by acting on the maintenance of the actin cytoskeleton. Positively regulates the actin polymerization, by inhibiting the interaction of actin-capping proteins with actin. The polypeptide is Capping protein-inhibiting regulator of actin dynamics (Homo sapiens (Human)).